Reading from the N-terminus, the 349-residue chain is Bifunctional nitrilase/nitrile hydratase NIT4A (349 aa).

The CN hydrolase domain maps to 29-301 (VRATVVQAST…EALISADLDL (273 aa)). Catalysis depends on E69, which acts as the Proton acceptor. K156 acts as the Proton donor in catalysis. C190 acts as the Nucleophile in catalysis.

The protein belongs to the carbon-nitrogen hydrolase superfamily. Nitrilase family. As to expression, expressed in roots, stems, cotyledons, leaves and flowers.

Its subcellular location is the cell membrane. It carries out the reaction a nitrile + 2 H2O = a carboxylate + NH4(+). The catalysed reaction is 3-cyano-L-alanine + 2 H2O = L-aspartate + NH4(+). The enzyme catalyses L-asparagine = 3-cyano-L-alanine + H2O. Functionally, highly specific for beta-cyano-L-alanine (Ala(CN)). Low activity with 3-phenylpropionitrile (PPN). Not associated with auxin production but may be involved in cyanide detoxification. The protein is Bifunctional nitrilase/nitrile hydratase NIT4A (NIT4A) of Nicotiana tabacum (Common tobacco).